A 353-amino-acid polypeptide reads, in one-letter code: MTEPLKPRIDFDGPLDVDQNPEFRAQQTFDENQAQNFAPATLDEAPEEEGQVEAVMDAALRPKRSLWRKMVMGGLALFGASVVGQGVQWTMNAWQTQDWVALGGCAAGALIIGAGVGSVVTEWRRLWRLRQRAHERDEARDLLHSHGTGKGRAFCEKLAQQAGIDQSHPALQRWYASIHETQNDREVVSLYAHLVQPVLDAQARREISRSAAESTLMIAVSPLALVDMAFIAWRNLRLINRIATLYGIELGYYSRLRLFKLVLLNIAFAGASELVREVGMDWMSQDLAARLSTRAAQGIGAGLLTARLGIKAMELCRPLPWLDDDKPRLGDFRRQLIGQVKETLQKGKTPSEK.

The next 3 membrane-spanning stretches (helical) occupy residues 70–90 (MVMG…VQWT), 100–120 (VALG…GSVV), and 213–233 (ESTL…FIAW).

This sequence belongs to the UPF0283 family.

The protein localises to the cell inner membrane. The protein is UPF0283 membrane protein YcjF of Escherichia coli O7:K1 (strain IAI39 / ExPEC).